The primary structure comprises 57 residues: uncharacterized protein (57 aa).

Residues 24-44 (LWVTLLLTMFFTAVEIIGGLI) traverse the membrane as a helical segment.

To cation A.eutrophus efflux system protein CzcD.

It is found in the cell membrane. This is an uncharacterized protein from Bacillus caldolyticus.